The chain runs to 269 residues: Chymotrypsin-like elastase family member 3B (269 aa).

Residues 1 to 16 (MLRLLSSLLLVALASG) form the signal peptide. The propeptide at 17-27 (CGQPSHNPSSR) is activation peptide. A Peptidase S1 domain is found at 28 to 267 (VVNGEEAVPH…FIDWIEETIA (240 aa)). The cysteines at positions 57 and 73 are disulfide-linked. Catalysis depends on charge relay system residues H72 and D122. Disulfide bonds link C156-C222, C187-C203, and C212-C243. S216 functions as the Charge relay system in the catalytic mechanism.

It belongs to the peptidase S1 family. Elastase subfamily.

The enzyme catalyses Preferential cleavage: Ala-|-Xaa. Does not hydrolyze elastin.. Its function is as follows. Efficient protease with alanine specificity but only little elastolytic activity. The protein is Chymotrypsin-like elastase family member 3B (Cela3b) of Mus musculus (Mouse).